Consider the following 178-residue polypeptide: Interleukin-1 receptor antagonist protein (178 aa).

A signal peptide spans 1–26; sequence MEICWGPYSHLISLLLILLFHSEAAC. C92 and C142 form a disulfide bridge. An N-linked (GlcNAc...) asparagine glycan is attached at N110.

The protein belongs to the IL-1 family.

The protein resides in the secreted. It is found in the cytoplasm. Its function is as follows. Anti-inflammatory antagonist of interleukin-1 family of proinflammatory cytokines such as interleukin-1beta/IL1B and interleukin-1alpha/IL1A. Protects from immune dysregulation and uncontrolled systemic inflammation triggered by IL1 for a range of innate stimulatory agents such as pathogens. The polypeptide is Interleukin-1 receptor antagonist protein (Il1rn) (Mus musculus (Mouse)).